We begin with the raw amino-acid sequence, 406 residues long: Formate-dependent phosphoribosylglycinamide formyltransferase (406 aa).

N(1)-(5-phospho-beta-D-ribosyl)glycinamide contacts are provided by residues 27 to 28 and E87; that span reads EL. ATP-binding positions include R120, K162, 167-172, 202-205, and E210; these read SSGKGQ and EGFI. The ATP-grasp domain occupies 125–320; sequence RLAAETLGLP…EFELHARALL (196 aa). Mg(2+) contacts are provided by E279 and E291. Residues D298, K367, and 374-375 contribute to the N(1)-(5-phospho-beta-D-ribosyl)glycinamide site; that span reads RR.

This sequence belongs to the PurK/PurT family. In terms of assembly, homodimer.

The enzyme catalyses N(1)-(5-phospho-beta-D-ribosyl)glycinamide + formate + ATP = N(2)-formyl-N(1)-(5-phospho-beta-D-ribosyl)glycinamide + ADP + phosphate + H(+). It participates in purine metabolism; IMP biosynthesis via de novo pathway; N(2)-formyl-N(1)-(5-phospho-D-ribosyl)glycinamide from N(1)-(5-phospho-D-ribosyl)glycinamide (formate route): step 1/1. In terms of biological role, involved in the de novo purine biosynthesis. Catalyzes the transfer of formate to 5-phospho-ribosyl-glycinamide (GAR), producing 5-phospho-ribosyl-N-formylglycinamide (FGAR). Formate is provided by PurU via hydrolysis of 10-formyl-tetrahydrofolate. In Bordetella bronchiseptica (strain ATCC BAA-588 / NCTC 13252 / RB50) (Alcaligenes bronchisepticus), this protein is Formate-dependent phosphoribosylglycinamide formyltransferase.